The primary structure comprises 380 residues: Erythronate-4-phosphate dehydrogenase (380 aa).

The substrate site is built by serine 45 and threonine 66. Residues aspartate 146, threonine 174, 205–207, and aspartate 231 contribute to the NAD(+) site; that span reads ASR. Arginine 207 is a catalytic residue. The active site involves glutamate 236. Histidine 253 (proton donor) is an active-site residue. Residue glycine 256 coordinates NAD(+). Tyrosine 257 is a binding site for substrate.

This sequence belongs to the D-isomer specific 2-hydroxyacid dehydrogenase family. PdxB subfamily. As to quaternary structure, homodimer.

It is found in the cytoplasm. It carries out the reaction 4-phospho-D-erythronate + NAD(+) = (R)-3-hydroxy-2-oxo-4-phosphooxybutanoate + NADH + H(+). It functions in the pathway cofactor biosynthesis; pyridoxine 5'-phosphate biosynthesis; pyridoxine 5'-phosphate from D-erythrose 4-phosphate: step 2/5. Functionally, catalyzes the oxidation of erythronate-4-phosphate to 3-hydroxy-2-oxo-4-phosphonooxybutanoate. The chain is Erythronate-4-phosphate dehydrogenase from Pseudomonas putida (strain GB-1).